Here is a 219-residue protein sequence, read N- to C-terminus: Transcriptional activator protein rep2 (219 aa).

A zinc finger spans residues 177 to 197 (CSKCNTTFNHSTALMMHEATC).

In terms of biological role, transcriptional activator which interacts with the mcb binding subunit complex formed by res2 and cdc10. Rep2 is required for the mitotic cell cycle start. The protein is Transcriptional activator protein rep2 (rep2) of Schizosaccharomyces pombe (strain 972 / ATCC 24843) (Fission yeast).